We begin with the raw amino-acid sequence, 248 residues long: ATP synthase subunit a, chloroplastic (248 aa).

4 helical membrane passes run Val96–Leu116, Ile135–Tyr155, Leu200–Leu220, and Gly221–Gly241.

This sequence belongs to the ATPase A chain family. As to quaternary structure, F-type ATPases have 2 components, CF(1) - the catalytic core - and CF(0) - the membrane proton channel. CF(1) has five subunits: alpha(3), beta(3), gamma(1), delta(1), epsilon(1). CF(0) has four main subunits: a, b, b' and c.

It is found in the plastid. It localises to the chloroplast thylakoid membrane. Functionally, key component of the proton channel; it plays a direct role in the translocation of protons across the membrane. The protein is ATP synthase subunit a, chloroplastic of Adiantum capillus-veneris (Maidenhair fern).